The following is a 292-amino-acid chain: Nucleophosmin (292 aa).

The residue at position 1 (Met-1) is an N-acetylmethionine. A necessary for interaction with APEX1 region spans residues Met-1–Val-117. The tract at residues Met-1–Thr-185 is required for interaction with SENP3. Residue Ser-4 is modified to Phosphoserine; by PLK1 and PLK2. At Ser-10 the chain carries Phosphoserine. Lys-27 participates in a covalent cross-link: Glycyl lysine isopeptide (Lys-Gly) (interchain with G-Cter in SUMO2). Lys-32 is subject to N6-acetyllysine; alternate. Lys-32 is covalently cross-linked (Glycyl lysine isopeptide (Lys-Gly) (interchain with G-Cter in SUMO1); alternate). Lys-32 is covalently cross-linked (Glycyl lysine isopeptide (Lys-Gly) (interchain with G-Cter in SUMO2); alternate). Position 43 is a phosphoserine (Ser-43). Tyr-67 is subject to Phosphotyrosine. A Phosphoserine modification is found at Ser-70. 2 positions are modified to phosphothreonine: Thr-75 and Thr-95. Residues Ser-125 and Ser-139 each carry the phosphoserine modification. Residues Met-138–Lys-248 form a disordered region. A Glycyl lysine isopeptide (Lys-Gly) (interchain with G-Cter in SUMO2) cross-link involves residue Lys-141. Lys-150 carries the post-translational modification N6-acetyllysine; alternate. Lys-150 is covalently cross-linked (Glycyl lysine isopeptide (Lys-Gly) (interchain with G-Cter in SUMO2); alternate). The Nuclear localization signal signature appears at Pro-152–Lys-157. At Lys-154 the chain carries N6-acetyllysine. Acidic residues predominate over residues Asp-159–Glu-186. An interaction with NOP2 region spans residues Glu-186–Lys-214. Basic and acidic residues predominate over residues Glu-187–Pro-199. The Nuclear localization signal signature appears at Pro-190 to Arg-196. Thr-198 is modified (phosphothreonine; by CDK1 and CDK2). A compositionally biased stretch (polar residues) spans Lys-201 to Gly-210. Position 206 is an ADP-ribosylserine (Ser-206). The residue at position 211 (Lys-211) is an N6-acetyllysine. Lys-214 is covalently cross-linked (Glycyl lysine isopeptide (Lys-Gly) (interchain with G-Cter in SUMO2)). Phosphothreonine; by CDK1 is present on Thr-217. Residues Lys-221 to Pro-233 are compositionally biased toward basic and acidic residues. Ser-225 is subject to Phosphoserine. Lys-227 carries the N6-acetyllysine modification. Lys-228 bears the N6-acetyllysine; alternate mark. Lys-228 is covalently cross-linked (Glycyl lysine isopeptide (Lys-Gly) (interchain with G-Cter in SUMO); alternate). 2 positions are modified to phosphothreonine; by CDK1: Thr-232 and Thr-235. 2 positions are modified to phosphoserine: Ser-240 and Ser-241. The tract at residues Ser-241–Leu-292 is required for nucleolar localization. A Glycyl lysine isopeptide (Lys-Gly) (interchain with G-Cter in SUMO1); alternate cross-link involves residue Lys-246. Glycyl lysine isopeptide (Lys-Gly) (interchain with G-Cter in SUMO2); alternate cross-links involve residues Lys-246 and Lys-248. At Lys-248 the chain carries N6-acetyllysine; alternate. Phosphoserine is present on Ser-252. Lys-255 is subject to N6-acetyllysine; alternate. Residue Lys-255 forms a Glycyl lysine isopeptide (Lys-Gly) (interchain with G-Cter in SUMO1); alternate linkage. Lys-255 participates in a covalent cross-link: Glycyl lysine isopeptide (Lys-Gly) (interchain with G-Cter in SUMO2); alternate. Ser-258 carries the post-translational modification Phosphoserine. Glycyl lysine isopeptide (Lys-Gly) (interchain with G-Cter in SUMO2); alternate cross-links involve residues Lys-261, Lys-265, and Lys-271. Residue Lys-261 forms a Glycyl lysine isopeptide (Lys-Gly) (interchain with G-Cter in SUMO); alternate linkage. Lys-265 and Lys-271 each carry N6-acetyllysine; alternate. Residue Lys-265 forms a Glycyl lysine isopeptide (Lys-Gly) (interchain with G-Cter in SUMO1); alternate linkage. At Lys-265 the chain carries N6-succinyllysine; alternate. Thr-277 is subject to Phosphothreonine. Lys-290 carries the N6-acetyllysine modification.

The protein belongs to the nucleoplasmin family. Decamer formed by two pentameric rings associated in a head-to-head fashion. Disulfide-linked dimers under certain conditions. Interacts with NSUN2 and SENP3. The SWAP complex consists of NPM1, NCL, PARP1 and SWAP70. Interacts with the methylated form of RPS10. Interacts (via N-terminal domain) with APEX1; the interaction is RNA-dependent and decreases peroxide-damaged cells. Interacts with NEK2. Interacts with ROCK2 and BRCA2. Interacts with RPGR. Interacts with CENPW. Interacts with EIF2AK2/PKR. Interacts with DDX31; this interaction prevents interaction between NPM1 and HDM2. Interacts with MYC; competitive with NOP53. Interacts with NOP53; the interaction is direct and competitive with MYC. Interacts with LRRC34. Interacts with RRP1B. Interacts with NPM3. Interacts with ALKBH2. Interacts with TTF1 (via C-terminal region). Interacts with NOP2. Interacts with ARID3C (via REKLES DOMAIN); the interaction mediates ARID3C nuclear shuttling. Post-translationally, acetylated at C-terminal lysine residues, thereby increasing affinity to histones. ADP-ribosylated. In terms of processing, phosphorylated at Ser-4 by PLK1 and PLK2. Phosphorylation at Ser-4 by PLK2 in S phase is required for centriole duplication and is sufficient to trigger centriole replication. Phosphorylation at Ser-4 by PLK1 takes place during mitosis. Phosphorylated by CDK2 at Ser-125 and Thr-198. Phosphorylation at Thr-198 may trigger initiation of centrosome duplication. Phosphorylated by CDK1 at Thr-198, Thr-217, Thr-232 and Thr-235 during cell mitosis. When these four sites are phosphorated, RNA-binding activity seem to be abolished. May be phosphorylated at Ser-70 by NEK2. The Thr-198 phosphorylated form has higher affinity for ROCK2. Post-translationally, sumoylated by ARF. Ubiquitinated. Ubiquitination leads to proteasomal degradation. Deubiquitinated by USP36. Expressed in B-cells that have been induced to switch to various Ig isotypes.

It localises to the nucleus. Its subcellular location is the nucleolus. It is found in the nucleoplasm. The protein resides in the cytoplasm. The protein localises to the cytoskeleton. It localises to the microtubule organizing center. Its subcellular location is the centrosome. In terms of biological role, involved in diverse cellular processes such as ribosome biogenesis, centrosome duplication, protein chaperoning, histone assembly, cell proliferation, and regulation of tumor suppressors p53/TP53 and ARF. Binds ribosome presumably to drive ribosome nuclear export. Associated with nucleolar ribonucleoprotein structures and bind single-stranded nucleic acids. Acts as a chaperonin for the core histones H3, H2B and H4. Stimulates APEX1 endonuclease activity on apurinic/apyrimidinic (AP) double-stranded DNA but inhibits APEX1 endonuclease activity on AP single-stranded RNA. May exert a control of APEX1 endonuclease activity within nucleoli devoted to repair AP on rDNA and the removal of oxidized rRNA molecules. In concert with BRCA2, regulates centrosome duplication. Regulates centriole duplication: phosphorylation by PLK2 is able to trigger centriole replication. Negatively regulates the activation of EIF2AK2/PKR and suppresses apoptosis through inhibition of EIF2AK2/PKR autophosphorylation. Antagonizes the inhibitory effect of ATF5 on cell proliferation and relieves ATF5-induced G2/M blockade. In complex with MYC enhances the transcription of MYC target genes. May act as chaperonin or cotransporter in the nucleolar localization of transcription termination factor TTF1. In Mus musculus (Mouse), this protein is Nucleophosmin (Npm1).